The following is a 2313-amino-acid chain: Histone-lysine N-methyltransferase Set2 (2313 aa).

Disordered stretches follow at residues 1 to 115 (MEES…ASTS), 179 to 442 (AVGG…EETF), 550 to 858 (EPPL…LKAK), 883 to 1106 (RLDE…KKAL), 1118 to 1150 (ETES…PFGD), and 1163 to 1251 (KRDK…SQGR). Residues 17–29 (GRGRGRPPKVALS) constitute a DNA-binding region (a.T hook 1). The segment covering 73-82 (IKFDVRDLLN) has biased composition (basic and acidic residues). Over residues 101–115 (STGHSQSGTTAASTS) the composition is skewed to low complexity. Residues 197–209 (PRKRGRPRKSQLA) constitute a DNA-binding region (a.T hook 2). Residues 221–241 (SCSDSDTNSTSTTTSNMSSDS) show a composition bias toward low complexity. Over residues 252–265 (PKSKLRVSLKRLKL) the composition is skewed to basic residues. Low complexity predominate over residues 266–288 (GGRLESSDSGNSPSSSSPEVEPP). Positions 330 to 345 (ESPKGEEEQEEGRPVE) are enriched in basic and acidic residues. Composition is skewed to acidic residues over residues 347 to 356 (EPQDLIDIDM), 365 to 375 (PDPEEDLDEIM), and 388 to 398 (ADDEAEEEEDA). At threonine 404 the chain carries Phosphothreonine. Residues 412–433 (ADSCSSAPRRSRRSAPLSGSSR) are compositionally biased toward low complexity. A compositionally biased stretch (basic and acidic residues) spans 552–563 (PLKDESDPKQTE). Residues 659 to 671 (EDYESNQEQVAED) are compositionally biased toward acidic residues. A compositionally biased stretch (polar residues) spans 676–685 (CNNQKGQKQT). Composition is skewed to basic and acidic residues over residues 689–708 (EMKE…EKAM), 719–732 (VDKK…EKKV), 740–749 (VPEKKMDSKK), and 758–782 (KQKE…KSSA). A phosphoserine mark is found at serine 786 and serine 788. 3 stretches are compositionally biased toward polar residues: residues 800-833 (AQWS…SNQP), 918-928 (KSLSGKTSLRR), and 938-955 (LERN…NTSA). Residues 959 to 969 (KPSKVKKKINP) show a composition bias toward basic residues. A compositionally biased stretch (low complexity) spans 997–1010 (SSPVSTSSDSSSKR). A compositionally biased stretch (basic and acidic residues) spans 1016-1039 (TTSDLDGGSKLDQRRYTICEDRQP). Low complexity-rich tracts occupy residues 1085–1097 (SRQN…SSAS) and 1118–1127 (ETESSESTSS). Residues 1163-1183 (KRDKVDEDQRKEGQDEVKREA) show a composition bias toward basic and acidic residues. Residues 1199–1213 (TPATTPTPSPTQSNP) show a composition bias toward low complexity. Positions 1307–1360 (NAEMQCDCFLTGDEEAQGHLSCGAGCINRMLMIECGPLCSNGARCTNKRFQQHQ) constitute an AWS domain. Residues cysteine 1312, cysteine 1314, cysteine 1328, cysteine 1332, cysteine 1341, cysteine 1345, and cysteine 1351 each contribute to the Zn(2+) site. The region spanning 1362–1479 (WPCRVFRTEK…PGEEITFDYQ (118 aa)) is the SET domain. S-adenosyl-L-methionine is bound by residues 1415 to 1417 (HYY) and 1440 to 1441 (NH). A Zn(2+)-binding site is contributed by cysteine 1443. The 17-residue stretch at 1486 to 1502 (DAQRCYCEAANCRGWIG) folds into the Post-SET domain. Glutamine 1488 contacts S-adenosyl-L-methionine. A Zn(2+)-binding site is contributed by cysteine 1490. Tyrosine 1491 lines the S-adenosyl-L-methionine pocket. Residues cysteine 1492 and cysteine 1497 each contribute to the Zn(2+) site. 2 disordered regions span residues 1501–1598 (IGGE…KPKV) and 1763–1860 (MKEH…RRTL). Residues 1505–1534 (PDSDEGEQLDEESDSDAEMDEEELEAEPEE) are compositionally biased toward acidic residues. Over residues 1539–1551 (KSAKAKAKSKLKA) the composition is skewed to basic residues. Basic and acidic residues-rich tracts occupy residues 1564–1574 (QTKPKDREYKA), 1763–1774 (MKEHEREADRQQ), and 1784–1806 (EDQR…RDTT). Residues 1817 to 1832 (SGNNTICTITTQQKGS) show a composition bias toward polar residues. Positions 1840 to 1860 (TRNDNRRRSDIGPPSEQRRTL) are enriched in basic and acidic residues. In terms of domain architecture, WW spans 1963–1996 (DPLPPAWNWQVTSDGDIYYYNLRERISQWEPPSP). Residues serine 2130 and serine 2131 each carry the phosphoserine modification. Positions 2177 to 2218 (LGTVGKRKLPMPPSVTVKKHRQEQRSKKVKSSQSPLTATSAR) are disordered. Residues 2193–2206 (VKKHRQEQRSKKVK) are compositionally biased toward basic residues. Residues 2207–2216 (SSQSPLTATS) are compositionally biased toward polar residues.

It belongs to the class V-like SAM-binding methyltransferase superfamily. Histone-lysine methyltransferase family. SET2 subfamily. As to quaternary structure, interacts with (phosphorylated) Polr2A.

Its subcellular location is the nucleus. It is found in the chromosome. It carries out the reaction L-lysyl(36)-[histone H3] + 3 S-adenosyl-L-methionine = N(6),N(6),N(6)-trimethyl-L-lysyl(36)-[histone H3] + 3 S-adenosyl-L-homocysteine + 3 H(+). Functionally, histone methyltransferase that specifically trimethylates 'Lys-36' of histone H3 (H3K36me3). Represents the main enzyme generating H3K36me3, a specific tag for epigenetic transcriptional activation. Involved in dosage compensation in males (X chromosome dosage compensation) by mediating formation of H3K36me3, a mark recognized by msl-3 component of the MSL complex. In addition to its role in dosage compensation in males, promotes germline stem cell differentiation in females: catalyzes formation of H3K36me3, promoting recruitment of msl-3 and subsequent recruitment of the ATAC complex, leading to transcription of genes, such as RpS19b. This is Histone-lysine N-methyltransferase Set2 from Drosophila melanogaster (Fruit fly).